The following is a 208-amino-acid chain: Large ribosomal subunit protein uL3 (208 aa).

An N5-methylglutamine modification is found at Gln149.

Belongs to the universal ribosomal protein uL3 family. Part of the 50S ribosomal subunit. Forms a cluster with proteins L14 and L19. Post-translationally, methylated by PrmB.

Its function is as follows. One of the primary rRNA binding proteins, it binds directly near the 3'-end of the 23S rRNA, where it nucleates assembly of the 50S subunit. This chain is Large ribosomal subunit protein uL3, found in Actinobacillus succinogenes (strain ATCC 55618 / DSM 22257 / CCUG 43843 / 130Z).